Reading from the N-terminus, the 402-residue chain is Acetate kinase (402 aa).

Asn13 provides a ligand contact to Mg(2+). Lys20 is a binding site for ATP. Substrate is bound at residue Arg94. Residue Asp151 is the Proton donor/acceptor of the active site. ATP is bound by residues 211 to 215 (HLGNG), 285 to 287 (DFR), and 333 to 337 (GVGEN). Glu387 contacts Mg(2+).

The protein belongs to the acetokinase family. As to quaternary structure, homodimer. The cofactor is Mg(2+). Mn(2+) serves as cofactor.

It is found in the cytoplasm. The catalysed reaction is acetate + ATP = acetyl phosphate + ADP. Its pathway is metabolic intermediate biosynthesis; acetyl-CoA biosynthesis; acetyl-CoA from acetate: step 1/2. Functionally, catalyzes the formation of acetyl phosphate from acetate and ATP. Can also catalyze the reverse reaction. This chain is Acetate kinase, found in Nocardia farcinica (strain IFM 10152).